Reading from the N-terminus, the 264-residue chain is Putative hydro-lyase Cgl2544/cg2803 (264 aa).

Belongs to the D-glutamate cyclase family.

This chain is Putative hydro-lyase Cgl2544/cg2803, found in Corynebacterium glutamicum (strain ATCC 13032 / DSM 20300 / JCM 1318 / BCRC 11384 / CCUG 27702 / LMG 3730 / NBRC 12168 / NCIMB 10025 / NRRL B-2784 / 534).